Here is a 287-residue protein sequence, read N- to C-terminus: Small ribosomal subunit protein uS10m (287 aa).

Residues 1 to 33 constitute a mitochondrion transit peptide; sequence MSLFSPHRILLRTGSAFQLATATRALLSTSSQL. Positions 33–43 are enriched in polar residues; the sequence is LRNTKNAQSGL. The interval 33-84 is disordered; the sequence is LRNTKNAQSGLAEQARAEEPVASSPSQTTRPEQKSLEEETTKQTQTHADSTV. Residues 63-73 show a composition bias toward basic and acidic residues; the sequence is PEQKSLEEETT. Residues 74-84 are compositionally biased toward polar residues; the sequence is KQTQTHADSTV.

This sequence belongs to the universal ribosomal protein uS10 family. In terms of assembly, part of the mitochondrial small ribosomal subunit.

It localises to the mitochondrion. Its function is as follows. Involved in mitochondrial genome encoded proteins translation. Involved in the binding of tRNA to the ribosomes. The chain is Small ribosomal subunit protein uS10m (rsm10) from Emericella nidulans (strain FGSC A4 / ATCC 38163 / CBS 112.46 / NRRL 194 / M139) (Aspergillus nidulans).